Consider the following 387-residue polypeptide: 3-hydroxy-D-aspartate aldolase (387 aa).

K62 carries the N6-(pyridoxal phosphate)lysine modification. Pyridoxal 5'-phosphate is bound by residues Q85, T238, 256 to 257, and Y265; that span reads GS. 2 residues coordinate Mg(2+): H355 and D357.

The protein belongs to the DSD1 family. As to quaternary structure, homodimer. Pyridoxal 5'-phosphate is required as a cofactor. It depends on Mg(2+) as a cofactor.

The enzyme catalyses (3S)-3-hydroxy-D-aspartate = glyoxylate + glycine. It catalyses the reaction (3R)-3-hydroxy-D-aspartate = glyoxylate + glycine. Functionally, catalyzes the condensation of glyoxylate and glycine into (2R,3S)-beta-hydroxyaspartate ((3S)-3-hydroxy-D-aspartate). Is essential for the growth of P.denitrificans in the presence of glycolate and glyoxylate since it functions in glyoxylate assimilation via the beta-hydroxyaspartate cycle (BHAC). Is also able to catalyze the reverse reaction in vitro, i.e. the cleavage of (3S)-3-hydroxy-D-aspartate, and that of D-threonine to a lesser extent. This is 3-hydroxy-D-aspartate aldolase from Paracoccus denitrificans (strain Pd 1222).